An 83-amino-acid polypeptide reads, in one-letter code: Weak toxin DE-1 (83 aa).

Positions 1 to 21 are cleaved as a signal peptide; it reads MKTLLLTLVVVTIVCLDLGYS. Cystine bridges form between C24/C45, C38/C62, C64/C75, and C76/C81.

The protein belongs to the three-finger toxin family. Short-chain subfamily. Type I alpha-neurotoxin sub-subfamily. In terms of tissue distribution, expressed by the venom gland.

The protein resides in the secreted. This chain is Weak toxin DE-1, found in Ophiophagus hannah (King cobra).